Consider the following 423-residue polypeptide: Lipoyl synthase 1, mitochondrial (423 aa).

[4Fe-4S] cluster is bound by residues Cys127, Cys132, Cys138, Cys159, Cys163, Cys166, and Ser375. Positions 142–364 (DEEEGTATAT…EEEAMAMGFL (223 aa)) constitute a Radical SAM core domain.

The protein belongs to the radical SAM superfamily. Lipoyl synthase family. [4Fe-4S] cluster is required as a cofactor.

The protein localises to the mitochondrion. It carries out the reaction [[Fe-S] cluster scaffold protein carrying a second [4Fe-4S](2+) cluster] + N(6)-octanoyl-L-lysyl-[protein] + 2 oxidized [2Fe-2S]-[ferredoxin] + 2 S-adenosyl-L-methionine + 4 H(+) = [[Fe-S] cluster scaffold protein] + N(6)-[(R)-dihydrolipoyl]-L-lysyl-[protein] + 4 Fe(3+) + 2 hydrogen sulfide + 2 5'-deoxyadenosine + 2 L-methionine + 2 reduced [2Fe-2S]-[ferredoxin]. The protein operates within protein modification; protein lipoylation via endogenous pathway; protein N(6)-(lipoyl)lysine from octanoyl-[acyl-carrier-protein]: step 2/2. Functionally, catalyzes the radical-mediated insertion of two sulfur atoms into the C-6 and C-8 positions of the octanoyl moiety bound to the lipoyl domains of lipoate-dependent enzymes, thereby converting the octanoylated domains into lipoylated derivatives. This chain is Lipoyl synthase 1, mitochondrial, found in Trypanosoma cruzi (strain CL Brener).